Consider the following 156-residue polypeptide: Ribosomal RNA large subunit methyltransferase H (156 aa).

S-adenosyl-L-methionine is bound by residues L73, G104, and 123-128; that span reads LSALTL.

This sequence belongs to the RNA methyltransferase RlmH family. Homodimer.

Its subcellular location is the cytoplasm. It catalyses the reaction pseudouridine(1915) in 23S rRNA + S-adenosyl-L-methionine = N(3)-methylpseudouridine(1915) in 23S rRNA + S-adenosyl-L-homocysteine + H(+). Specifically methylates the pseudouridine at position 1915 (m3Psi1915) in 23S rRNA. This is Ribosomal RNA large subunit methyltransferase H from Shewanella frigidimarina (strain NCIMB 400).